The chain runs to 82 residues: ATP synthase subunit c (82 aa).

A run of 2 helical transmembrane segments spans residues 3–23 (PLIA…ASLG) and 57–77 (LAFM…LLFA).

In terms of assembly, F-type ATPases have 2 components, F(1) - the catalytic core - and F(0) - the membrane proton channel. F(1) has five subunits: alpha(3), beta(3), gamma(1), delta(1), epsilon(1). F(0) has four main subunits: a(1), b(1), b'(1) and c(10-14). The alpha and beta chains form an alternating ring which encloses part of the gamma chain. F(1) is attached to F(0) by a central stalk formed by the gamma and epsilon chains, while a peripheral stalk is formed by the delta, b and b' chains.

The protein localises to the cellular thylakoid membrane. Its activity is regulated as follows. Inhibited by dicyclohexylcarbodiimide. Functionally, f(1)F(0) ATP synthase produces ATP from ADP in the presence of a proton or sodium gradient. F-type ATPases consist of two structural domains, F(1) containing the extramembraneous catalytic core and F(0) containing the membrane proton channel, linked together by a central stalk and a peripheral stalk. During catalysis, ATP synthesis in the catalytic domain of F(1) is coupled via a rotary mechanism of the central stalk subunits to proton translocation. Its function is as follows. Key component of the F(0) channel; it plays a direct role in translocation across the membrane. A homomeric c-ring of between 10-14 subunits forms the central stalk rotor element with the F(1) delta and epsilon subunits. The complex from the organism is particularly stable to disruption and remains functional after 6 hrs at 55 degrees Celsius. The sequence is that of ATP synthase subunit c (atpE) from Thermosynechococcus vestitus (strain NIES-2133 / IAM M-273 / BP-1).